The sequence spans 429 residues: MTDKNTRTEKIQPFSAPKGVPDYAPPRSAAFVAVRDAFITQAHLAGFEHIELPIFEETGLFARGVGESTDVVSKEMYTFADRGERSVTLRPEGTAGVMRAVIEHSLDRGQLPVKLNYAGPFFRYERPQAGRYRQLQQVGVEAIGVDDPALDAEIIALADRSYRSLGLTGFRLELTSLGDSNCRPAYRQKLQDFLLNLPLDEETRRRAEINPLRVLDDKRAEVREMTADAPLMLDHLDDGCRTHFETVTGLLDDMGVPYEINPRMVRGLDYYTKTTFEFIHDGLGAQSGIGGGGRYDGLMAQLGGQDLSGIGYGLGVDRTILALEAEGVTVGQERRVDVYGVPLGQAAKKAMAGIINDLRAAGISADMSYGDRGLKGAMKGADRSGSLYTLVLGENELDNGTVAVKDMRAHDQQDIALSEVVSALRAKLA.

The protein belongs to the class-II aminoacyl-tRNA synthetase family. In terms of assembly, homodimer.

The protein resides in the cytoplasm. The catalysed reaction is tRNA(His) + L-histidine + ATP = L-histidyl-tRNA(His) + AMP + diphosphate + H(+). The sequence is that of Histidine--tRNA ligase from Corynebacterium efficiens (strain DSM 44549 / YS-314 / AJ 12310 / JCM 11189 / NBRC 100395).